Here is a 551-residue protein sequence, read N- to C-terminus: FGGY carbohydrate kinase domain-containing protein (551 aa).

Belongs to the FGGY kinase family. As to expression, expressed in kidney, lung and small intestine and to a lower extent in liver and detected in cerebrospinal fluid (at protein level).

The catalysed reaction is D-ribulose + ATP = D-ribulose 5-phosphate + ADP + H(+). Its pathway is carbohydrate metabolism; pentose and glucuronate interconversion. In terms of biological role, catalyzes ATP-dependent phosphorylation of D-ribulose at C-5 to form D-ribulose 5-phosphate. Postulated to function in a metabolite repair mechanism by preventing toxic accumulation of free D-ribulose formed by non-specific phosphatase activities. Alternatively, may play a role in regulating D-ribulose 5-phosphate recycling in the pentose phosphate pathway. Can phosphorylate ribitol with low efficiency. This chain is FGGY carbohydrate kinase domain-containing protein, found in Homo sapiens (Human).